A 393-amino-acid chain; its full sequence is uncharacterized protein (393 aa).

Positions 164-183 are disordered; sequence ASDPHPGKNSPASPTGENKE. Over residues 173–183 the composition is skewed to polar residues; the sequence is SPASPTGENKE.

This is an uncharacterized protein from Treponema pallidum (strain Nichols).